A 425-amino-acid chain; its full sequence is Serine--tRNA ligase (425 aa).

229–231 (TSE) contacts L-serine. Residues 259–261 (RKE) and Val275 each bind ATP. Glu282 serves as a coordination point for L-serine. 349-352 (EITS) provides a ligand contact to ATP. Residue Thr384 participates in L-serine binding.

This sequence belongs to the class-II aminoacyl-tRNA synthetase family. Type-1 seryl-tRNA synthetase subfamily. As to quaternary structure, homodimer. The tRNA molecule binds across the dimer.

It localises to the cytoplasm. The enzyme catalyses tRNA(Ser) + L-serine + ATP = L-seryl-tRNA(Ser) + AMP + diphosphate + H(+). It carries out the reaction tRNA(Sec) + L-serine + ATP = L-seryl-tRNA(Sec) + AMP + diphosphate + H(+). It participates in aminoacyl-tRNA biosynthesis; selenocysteinyl-tRNA(Sec) biosynthesis; L-seryl-tRNA(Sec) from L-serine and tRNA(Sec): step 1/1. Functionally, catalyzes the attachment of serine to tRNA(Ser). Is also able to aminoacylate tRNA(Sec) with serine, to form the misacylated tRNA L-seryl-tRNA(Sec), which will be further converted into selenocysteinyl-tRNA(Sec). The polypeptide is Serine--tRNA ligase (Borreliella afzelii (strain PKo) (Borrelia afzelii)).